Reading from the N-terminus, the 142-residue chain is Large ribosomal subunit protein uL13 (142 aa).

This sequence belongs to the universal ribosomal protein uL13 family. As to quaternary structure, part of the 50S ribosomal subunit.

This protein is one of the early assembly proteins of the 50S ribosomal subunit, although it is not seen to bind rRNA by itself. It is important during the early stages of 50S assembly. The polypeptide is Large ribosomal subunit protein uL13 (Haemophilus influenzae (strain PittGG)).